A 399-amino-acid polypeptide reads, in one-letter code: 3-sulfinopropanoyl-CoA desulfinase (399 aa).

FAD-binding positions include 121–124 (ICIS), S130, and 153–156 (YWIT). 244–245 (YN) serves as a coordination point for substrate. FAD-binding positions include R273, Q340, S344, 367–371 (GGTAQ), and Q388.

Belongs to the acyl-CoA dehydrogenase family. As to quaternary structure, homotrimer or homotetramer. It depends on FAD as a cofactor.

The enzyme catalyses 3-sulfinopropanoyl-CoA + H2O = propanoyl-CoA + sulfite + H(+). Catalyzes the conversion 3-sulfinopropanoyl-CoA (3SP-CoA) to propanoyl-CoA by abstraction of sulfite. Does not show dehydrogenase activity. The protein is 3-sulfinopropanoyl-CoA desulfinase of Variovorax paradoxus.